The sequence spans 267 residues: Soluble interferon gamma receptor OPG193 (267 aa).

The N-terminal stretch at 1–17 (MRYIIILAVLFINSIHA) is a signal peptide. N-linked (GlcNAc...) asparagine; by host glycosylation is found at N42 and N150.

It belongs to the type II cytokine receptor family. As to quaternary structure, homodimer. Interacts with host IFNG.

It is found in the secreted. Counteracts the antiviral effects of host IFN-gamma. Acts as a soluble IFN-gamma receptor and thus inhibits the interaction between host IFN-gamma and its receptor. The sequence is that of Soluble interferon gamma receptor OPG193 (OPG193) from Cynomys gunnisoni (Gunnison's prairie dog).